Here is a 374-residue protein sequence, read N- to C-terminus: Fatty acid conjugase FAC2 A (374 aa).

2 consecutive transmembrane segments (helical) span residues 50 to 70 (IIVTCILFYVASNYIPMLPGF) and 74 to 94 (IVWPVYWISQGVFLGRLWMIG). Positions 95-99 (HECGH) match the Histidine box-1 motif. The short motif at 131-135 (HRNHH) is the Histidine box-2 element. 3 helical membrane-spanning segments follow: residues 168–188 (MGLMITMLCKLTFGYAAYIMF), 219–239 (VLFSDVGICIVLYACYRIVMV), and 246–266 (FYVYGIPWVIMSAILFAATYL). Positions 306 to 310 (HVIHH) match the Histidine box-3 motif.

The protein belongs to the fatty acid desaturase type 1 family. As to expression, expressed exclusively in the developing seeds. Not detected in leaves or flower buds.

It is found in the microsome membrane. It carries out the reaction a (9Z,12Z)-octadecadienoyl-containing glycerolipid + AH2 + O2 = a (8E,10E,12Z)-octadecatrienoyl-containing glycerolipid + A + 2 H2O. Its pathway is lipid metabolism; polyunsaturated fatty acid biosynthesis. Fatty acid conjugase converting 18:2(9Z, 12Z) to calendic acid 18:3(8E, 10E, 12Z). Converts alpha-linolenic acid (18:3(9Z, 12Z, 15Z)) into 18:4(8E, 10E, 12Z, 15Z). Also has weak activity on the mono-unsaturates 16:1(9Z) and 18:1(9Z) producing two conjugated double bonds at delta(8) and delta(10) position. In Calendula officinalis (Pot marigold), this protein is Fatty acid conjugase FAC2 A.